Consider the following 100-residue polypeptide: Urease subunit gamma (100 aa).

This sequence belongs to the urease gamma subunit family. Heterotrimer of UreA (gamma), UreB (beta) and UreC (alpha) subunits. Three heterotrimers associate to form the active enzyme.

The protein localises to the cytoplasm. It catalyses the reaction urea + 2 H2O + H(+) = hydrogencarbonate + 2 NH4(+). It participates in nitrogen metabolism; urea degradation; CO(2) and NH(3) from urea (urease route): step 1/1. The polypeptide is Urease subunit gamma (Polynucleobacter asymbioticus (strain DSM 18221 / CIP 109841 / QLW-P1DMWA-1) (Polynucleobacter necessarius subsp. asymbioticus)).